We begin with the raw amino-acid sequence, 267 residues long: Flap endonuclease Xni (267 aa).

A Mg(2+)-binding site is contributed by D115. In terms of domain architecture, 5'-3' exonuclease spans 171 to 261 (VAPAQLVDFW…LGFNLREIRY (91 aa)). 3 residues coordinate K(+): L182, V193, and I196. The interval 195 to 200 (GIGPKT) is interaction with DNA.

This sequence belongs to the Xni family. The cofactor is Mg(2+). Requires K(+) as cofactor.

In terms of biological role, has flap endonuclease activity. During DNA replication, flap endonucleases cleave the 5'-overhanging flap structure that is generated by displacement synthesis when DNA polymerase encounters the 5'-end of a downstream Okazaki fragment. The polypeptide is Flap endonuclease Xni (Aeromonas hydrophila subsp. hydrophila (strain ATCC 7966 / DSM 30187 / BCRC 13018 / CCUG 14551 / JCM 1027 / KCTC 2358 / NCIMB 9240 / NCTC 8049)).